Consider the following 311-residue polypeptide: Bifunctional protein FolD (311 aa).

NADP(+) is bound at residue 174–176; sequence GKG.

Belongs to the tetrahydrofolate dehydrogenase/cyclohydrolase family. As to quaternary structure, homodimer.

It carries out the reaction (6R)-5,10-methylene-5,6,7,8-tetrahydrofolate + NADP(+) = (6R)-5,10-methenyltetrahydrofolate + NADPH. The enzyme catalyses (6R)-5,10-methenyltetrahydrofolate + H2O = (6R)-10-formyltetrahydrofolate + H(+). It functions in the pathway one-carbon metabolism; tetrahydrofolate interconversion. In terms of biological role, catalyzes the oxidation of 5,10-methylenetetrahydrofolate to 5,10-methenyltetrahydrofolate and then the hydrolysis of 5,10-methenyltetrahydrofolate to 10-formyltetrahydrofolate. The chain is Bifunctional protein FolD from Pyrobaculum aerophilum (strain ATCC 51768 / DSM 7523 / JCM 9630 / CIP 104966 / NBRC 100827 / IM2).